The chain runs to 338 residues: 6-phosphogluconolactonase (338 aa).

Belongs to the cycloisomerase 2 family.

It catalyses the reaction 6-phospho-D-glucono-1,5-lactone + H2O = 6-phospho-D-gluconate + H(+). The protein operates within carbohydrate degradation; pentose phosphate pathway; D-ribulose 5-phosphate from D-glucose 6-phosphate (oxidative stage): step 2/3. Catalyzes the hydrolysis of 6-phosphogluconolactone to 6-phosphogluconate. This is 6-phosphogluconolactonase from Blochmanniella floridana.